The chain runs to 362 residues: MLSAGIVGLPNVGKSTLFSAITNLQVEIANYPFATIEPNAGIVNVIDERLDKLASLIKPDKVTHTTFRFVDIAGLVKGASKGEGLGNQFLANIREVDLICHVVRCYEDKKIVHVNNQVDPVFDFEIIVNELIQADIEVVNTRIGKIKRKAESGDKQSKEEYQLLAPVLQGLQQNQMVLHLVNEVDLKKLKSLNLLTAKPILVVANVSEADLSNLDHNPHLTQLNQFLKQHNLPHAIPVCALLENELSSLDANGRQDWLKELGLSDYQGLNQLIKTAYDAIGLWSFFTFGKQEVRAWAFKKGWLAPQCAGEIHTDFERGFIKVEVISWNQLYELKSLQEAKKQGLVRLRGQGLRDARWWCVSL.

The region spanning 2–258 (LSAGIVGLPN…LDANGRQDWL (257 aa)) is the OBG-type G domain. Position 11–16 (11–16 (NVGKST)) interacts with ATP. Mg(2+) contacts are provided by Ser15 and Thr35. One can recognise a TGS domain in the interval 281–347 (GLWSFFTFGK…EAKKQGLVRL (67 aa)).

This sequence belongs to the TRAFAC class OBG-HflX-like GTPase superfamily. OBG GTPase family. YchF/OLA1 subfamily. Mg(2+) is required as a cofactor.

ATPase that binds to both the 70S ribosome and the 50S ribosomal subunit in a nucleotide-independent manner. This is Ribosome-binding ATPase YchF from Mycoplasma pneumoniae (strain ATCC 29342 / M129 / Subtype 1) (Mycoplasmoides pneumoniae).